We begin with the raw amino-acid sequence, 501 residues long: Proline--tRNA ligase (501 aa).

It belongs to the class-II aminoacyl-tRNA synthetase family.

It catalyses the reaction tRNA(Pro) + L-proline + ATP = L-prolyl-tRNA(Pro) + AMP + diphosphate. The chain is Proline--tRNA ligase from Encephalitozoon cuniculi (strain GB-M1) (Microsporidian parasite).